A 475-amino-acid chain; its full sequence is MGKDVKKVHKLRHDPLSKQIEESESAYQKPHKRVGKLRKKKAEMENDTGIDETESVIPSALSKKILDQIREQAIEVEVEDRKKEKQEKLLTFEQERIQSKLLSFNDFIDDDDDDEDADQDDNKRRSNGNDFDENDGFEQFSDTESQFGVGGEVEIDEEDERVLSMFMGGGGGDGQEQQFQTRFTLGDIIESKLKEHESRQVSSENAINPKVIDVYTKVGKLLETYTSGKIPRAFRILPNFTNWEDLLYLTRPDKWTPHSIRVATKLFCMSTNSKITQRFLSIVVLPRVRDNIAEYKKLNYHLYMALKKSLYRPAAFYKAILLPLAESGDCTLLEAKIIGSVVCKVSIPVLHSSVALMKLSQLTRYNGATSMFIRMLCDKKYALPYRVIDGLVDHFVMFDEEVRELPVLWHRALLSFVQRYKTDITKDQKEKLKIILRKHNHHIITAEIRRELFFSNSRGGVAPSNFTDDTSSMME.

Basic residues-rich tracts occupy residues 1–12 and 29–41; these read MGKDVKKVHKLR and KPHKRVGKLRKKK. Disordered stretches follow at residues 1–57 and 106–149; these read MGKD…ESVI and DFID…QFGV. Acidic residues-rich tracts occupy residues 45–54 and 107–119; these read ENDTGIDETE and FIDDDDDDEDADQ.

This sequence belongs to the bystin family.

Its subcellular location is the nucleus. The protein localises to the nucleolus. Its function is as follows. Required for processing of 20S pre-rRNA precursor and biogenesis of 40S ribosomal subunits. This chain is Bystin (bysl), found in Dictyostelium discoideum (Social amoeba).